Consider the following 433-residue polypeptide: B3 domain-containing protein Os04g0676600 (433 aa).

Disordered stretches follow at residues Met1–Gln29 and Phe216–Asn283. The segment covering Gly13–Phe24 has biased composition (basic and acidic residues). A compositionally biased stretch (low complexity) spans Phe216 to Ala229. Basic and acidic residues predominate over residues Asp237–Glu265. Positions Thr269–Asn283 are enriched in polar residues. The TF-B3 DNA-binding region spans Leu297–Ile399.

It is found in the nucleus. In terms of biological role, probable transcription regulator that binds specifically to the DNA sequence 5'-CATGC-3' of the IDE1 element found in the promoter of the barley iron deficiency-inducible gene IDS2. The sequence is that of B3 domain-containing protein Os04g0676600 from Oryza sativa subsp. japonica (Rice).